A 129-amino-acid polypeptide reads, in one-letter code: Prefoldin subunit alpha (129 aa).

It belongs to the prefoldin alpha subunit family. Heterohexamer of two alpha and four beta subunits.

The protein localises to the cytoplasm. In terms of biological role, molecular chaperone capable of stabilizing a range of proteins. Seems to fulfill an ATP-independent, HSP70-like function in archaeal de novo protein folding. This Thermofilum pendens (strain DSM 2475 / Hrk 5) protein is Prefoldin subunit alpha.